A 227-amino-acid chain; its full sequence is Cytochrome c oxidase subunit 2 (227 aa).

Residues 1–14 (MAYPFQLGFQDATS) lie on the Mitochondrial intermembrane side of the membrane. Residues 15 to 45 (PIMEELLHFHDHTLMIVFLISSLVLYVISAM) traverse the membrane as a helical segment. The Mitochondrial matrix segment spans residues 46–59 (LTTNLTHTSTMDAQ). A helical membrane pass occupies residues 60 to 87 (EVETIWTILPAIILITIALPSLRILYMM). The Mitochondrial intermembrane segment spans residues 88–227 (DEINNPAMTI…YFEKWSVSML (140 aa)). Positions 161, 196, 198, 200, 204, and 207 each coordinate Cu cation. Mg(2+) is bound at residue glutamate 198. Tyrosine 218 carries the post-translational modification Phosphotyrosine.

Belongs to the cytochrome c oxidase subunit 2 family. As to quaternary structure, component of the cytochrome c oxidase (complex IV, CIV), a multisubunit enzyme composed of 14 subunits. The complex is composed of a catalytic core of 3 subunits MT-CO1, MT-CO2 and MT-CO3, encoded in the mitochondrial DNA, and 11 supernumerary subunits COX4I, COX5A, COX5B, COX6A, COX6B, COX6C, COX7A, COX7B, COX7C, COX8 and NDUFA4, which are encoded in the nuclear genome. The complex exists as a monomer or a dimer and forms supercomplexes (SCs) in the inner mitochondrial membrane with NADH-ubiquinone oxidoreductase (complex I, CI) and ubiquinol-cytochrome c oxidoreductase (cytochrome b-c1 complex, complex III, CIII), resulting in different assemblies (supercomplex SCI(1)III(2)IV(1) and megacomplex MCI(2)III(2)IV(2)). Found in a complex with TMEM177, COA6, COX18, COX20, SCO1 and SCO2. Interacts with TMEM177 in a COX20-dependent manner. Interacts with COX20. Interacts with COX16. Cu cation is required as a cofactor.

The protein localises to the mitochondrion inner membrane. The enzyme catalyses 4 Fe(II)-[cytochrome c] + O2 + 8 H(+)(in) = 4 Fe(III)-[cytochrome c] + 2 H2O + 4 H(+)(out). Component of the cytochrome c oxidase, the last enzyme in the mitochondrial electron transport chain which drives oxidative phosphorylation. The respiratory chain contains 3 multisubunit complexes succinate dehydrogenase (complex II, CII), ubiquinol-cytochrome c oxidoreductase (cytochrome b-c1 complex, complex III, CIII) and cytochrome c oxidase (complex IV, CIV), that cooperate to transfer electrons derived from NADH and succinate to molecular oxygen, creating an electrochemical gradient over the inner membrane that drives transmembrane transport and the ATP synthase. Cytochrome c oxidase is the component of the respiratory chain that catalyzes the reduction of oxygen to water. Electrons originating from reduced cytochrome c in the intermembrane space (IMS) are transferred via the dinuclear copper A center (CU(A)) of subunit 2 and heme A of subunit 1 to the active site in subunit 1, a binuclear center (BNC) formed by heme A3 and copper B (CU(B)). The BNC reduces molecular oxygen to 2 water molecules using 4 electrons from cytochrome c in the IMS and 4 protons from the mitochondrial matrix. In Macrotus californicus (Californian leaf-nosed bat), this protein is Cytochrome c oxidase subunit 2 (MT-CO2).